The following is a 215-amino-acid chain: Probable transaldolase (215 aa).

The Schiff-base intermediate with substrate role is filled by lysine 83.

The protein belongs to the transaldolase family. Type 3B subfamily.

The protein resides in the cytoplasm. It carries out the reaction D-sedoheptulose 7-phosphate + D-glyceraldehyde 3-phosphate = D-erythrose 4-phosphate + beta-D-fructose 6-phosphate. It functions in the pathway carbohydrate degradation; pentose phosphate pathway; D-glyceraldehyde 3-phosphate and beta-D-fructose 6-phosphate from D-ribose 5-phosphate and D-xylulose 5-phosphate (non-oxidative stage): step 2/3. Its function is as follows. Transaldolase is important for the balance of metabolites in the pentose-phosphate pathway. The sequence is that of Probable transaldolase from Methanococcus maripaludis (strain C6 / ATCC BAA-1332).